We begin with the raw amino-acid sequence, 74 residues long: Large ribosomal subunit protein uL30 (74 aa).

This sequence belongs to the universal ribosomal protein uL30 family. Part of the 50S ribosomal subunit.

The chain is Large ribosomal subunit protein uL30 from Koribacter versatilis (strain Ellin345).